We begin with the raw amino-acid sequence, 91 residues long: Putative regulatory protein PTH_1796 (91 aa).

Belongs to the RemA family.

This Pelotomaculum thermopropionicum (strain DSM 13744 / JCM 10971 / SI) protein is Putative regulatory protein PTH_1796.